The sequence spans 232 residues: Small ribosomal subunit protein uS2 (232 aa).

This sequence belongs to the universal ribosomal protein uS2 family.

In Desulforamulus reducens (strain ATCC BAA-1160 / DSM 100696 / MI-1) (Desulfotomaculum reducens), this protein is Small ribosomal subunit protein uS2.